We begin with the raw amino-acid sequence, 204 residues long: Thymidine kinase (204 aa).

Residues 15 to 22 and 88 to 91 contribute to the ATP site; these read GSMFSGKS and DEVQ. E89 functions as the Proton acceptor in the catalytic mechanism. The Zn(2+) site is built by C145, C148, C183, and C186.

Belongs to the thymidine kinase family. In terms of assembly, homotetramer.

The protein resides in the cytoplasm. The catalysed reaction is thymidine + ATP = dTMP + ADP + H(+). The chain is Thymidine kinase from Halalkalibacterium halodurans (strain ATCC BAA-125 / DSM 18197 / FERM 7344 / JCM 9153 / C-125) (Bacillus halodurans).